Reading from the N-terminus, the 285-residue chain is ATP phosphoribosyltransferase (285 aa).

Belongs to the ATP phosphoribosyltransferase family. Long subfamily. The cofactor is Mg(2+).

It localises to the cytoplasm. It catalyses the reaction 1-(5-phospho-beta-D-ribosyl)-ATP + diphosphate = 5-phospho-alpha-D-ribose 1-diphosphate + ATP. The protein operates within amino-acid biosynthesis; L-histidine biosynthesis; L-histidine from 5-phospho-alpha-D-ribose 1-diphosphate: step 1/9. Its activity is regulated as follows. Feedback inhibited by histidine. Functionally, catalyzes the condensation of ATP and 5-phosphoribose 1-diphosphate to form N'-(5'-phosphoribosyl)-ATP (PR-ATP). Has a crucial role in the pathway because the rate of histidine biosynthesis seems to be controlled primarily by regulation of HisG enzymatic activity. The sequence is that of ATP phosphoribosyltransferase from Sulfolobus acidocaldarius (strain ATCC 33909 / DSM 639 / JCM 8929 / NBRC 15157 / NCIMB 11770).